We begin with the raw amino-acid sequence, 132 residues long: Fatty acid-binding protein, brain (132 aa).

V2 carries the N-acetylvaline modification. 127–129 (RCY) contacts a fatty acid.

This sequence belongs to the calycin superfamily. Fatty-acid binding protein (FABP) family. As to expression, expressed in brain and other neural tissues.

It is found in the cytoplasm. Its function is as follows. B-FABP could be involved in the transport of a so far unknown hydrophobic ligand with potential morphogenic activity during CNS development. It is required for the establishment of the radial glial fiber system in developing brain, a system that is necessary for the migration of immature neurons to establish cortical layers. The chain is Fatty acid-binding protein, brain (Fabp7) from Mus musculus (Mouse).